Reading from the N-terminus, the 157-residue chain is Large ribosomal subunit protein eL24 (157 aa).

The disordered stretch occupies residues 94–157 (RNQKPEVRKA…ISAPRVGGKR (64 aa)). Over residues 96–117 (QKPEVRKAQREQAIRAAKESKK) the composition is skewed to basic and acidic residues. Residues 123 to 140 (KKPAAASAKTSAKTAQKP) show a composition bias toward low complexity.

The protein belongs to the eukaryotic ribosomal protein eL24 family. Component of the large ribosomal subunit.

It is found in the cytoplasm. Its function is as follows. Component of the large ribosomal subunit. The ribosome is a large ribonucleoprotein complex responsible for the synthesis of proteins in the cell. The protein is Large ribosomal subunit protein eL24 (rpl24) of Gillichthys mirabilis (Long-jawed mudsucker).